Consider the following 184-residue polypeptide: Protein GrpE (184 aa).

A compositionally biased stretch (polar residues) spans 1-14 (MANEQNEQSQDLSS). Residues 1-35 (MANEQNEQSQDLSSEQTTQDHEQTQTEGVEQGAEI) form a disordered region.

It belongs to the GrpE family. As to quaternary structure, homodimer.

The protein localises to the cytoplasm. Functionally, participates actively in the response to hyperosmotic and heat shock by preventing the aggregation of stress-denatured proteins, in association with DnaK and GrpE. It is the nucleotide exchange factor for DnaK and may function as a thermosensor. Unfolded proteins bind initially to DnaJ; upon interaction with the DnaJ-bound protein, DnaK hydrolyzes its bound ATP, resulting in the formation of a stable complex. GrpE releases ADP from DnaK; ATP binding to DnaK triggers the release of the substrate protein, thus completing the reaction cycle. Several rounds of ATP-dependent interactions between DnaJ, DnaK and GrpE are required for fully efficient folding. The protein is Protein GrpE of Acinetobacter baylyi (strain ATCC 33305 / BD413 / ADP1).